The chain runs to 1104 residues: MLPLRAFARLAQRPRLSRPTQLARSSLPRPSPSRPAAHYLALAPAPSTRFLHSSPPVLKEKRWLNNTPPEDDGEDGQNPKQDDQVEKPLPDAESSKSAEERAKSQSSKPDIKASSSDSVSSSAPAPGSADGGSPPGAGGPKEVAKPVIPEIYPQVLAIPITHRPLFPGFYKAVTVRSPPVIKAIRELQAHGQPYVGAFLLKDSTVDSDVVTDINQVQPVGVFCQITSCFTSQEGEGKPEALTAVLFPHRRIKINELVKSSGTKGDGTVGVGGLVEGSQDSAKGEGEVKSFESEVPGVEEVREELGTVSIDSEQPDVHKENRDLETKEVTQIDFLHSLLPQVSLTNVSNLSIEPYEKDSQVIRAIMSELISVFKEIAQLQPMFREQVTSFAISNTSSQVFDEPDKLADLAAVVSTADVSDLQAVLSSTSIEDRLQRALVLLKKELINAQLQFKISRDVDTKIQKRQREYYLMEQLKGIKKELGMESDGKDKLVEGFKEKASKLAMPEGVRKVFDEELNKLVHLEPAASEFNVTRNYIDWLTQVPWGVHTPENYNISHAIKILDEDHYGLKDVKDRILEFMAIGKLRGSVEGKILCLVGPPGVGKTSIGKSIAKALGRQFFRFSVGGLTDVAEIKGHRRTYIGAMPGKPIQALKKVATENPLILIDEVDKISKAYNGDPASALLEMLDPEQNKSFLDHYLDVPIDLSKVLFVCTANVLETIPGPLLDRMEVLEVSGYVSAEKMNIAERYLSPQAKVAAGLEDVNIELEPGAIEALIRYYCRESGVRNLKKHIDKIYRKAAFKIVTDLGESGLPEPATPPAENQVEAQYPDIKPASELTYNVIPGTEVSGVDTKTDVTTVPREPMKVPAGIHVKVTQENLKDYVGPPLYHKDRLYTHSPPAGVSTGLGYLGNGSGAVMPVEINSMPGKGNLQLTGKLGEVIRESAQIAMSWVKSNAYLLGITKSEAEATLNDRDVHLHMPEGGIGKEGPSAGTAILTAFVSLFTKTRVDPDIAMTGEISLLGQVLPVGGLKEKILAAHRAGIKKLIVPAGCKPDIDENVPESVKGGIEFVFVEDVRQVLHEAFRGTEVEKRWQETLPMEEEPQRERH.

A mitochondrion-targeting transit peptide spans 1-58 (MLPLRAFARLAQRPRLSRPTQLARSSLPRPSPSRPAAHYLALAPAPSTRFLHSSPPVL). Disordered stretches follow at residues 8–144 (ARLA…KEVA) and 275–295 (EGSQ…SEVP). Residues 22 to 46 (LARSSLPRPSPSRPAAHYLALAPAP) are compositionally biased toward low complexity. Basic and acidic residues predominate over residues 80 to 103 (KQDDQVEKPLPDAESSKSAEERAK). Positions 104-128 (SQSSKPDIKASSSDSVSSSAPAPGS) are enriched in low complexity. The segment covering 129-139 (ADGGSPPGAGG) has biased composition (gly residues). The region spanning 155-444 (VLAIPITHRP…RALVLLKKEL (290 aa)) is the Lon N-terminal domain. A compositionally biased stretch (basic and acidic residues) spans 281 to 291 (AKGEGEVKSFE). Residue 597 to 604 (GPPGVGKT) participates in ATP binding. Residues 895–1082 (SPPAGVSTGL…RQVLHEAFRG (188 aa)) form the Lon proteolytic domain. Residues serine 987 and lysine 1030 contribute to the active site.

This sequence belongs to the peptidase S16 family. In terms of assembly, homohexamer or homoheptamer. Organized in a ring with a central cavity.

The protein localises to the mitochondrion matrix. It catalyses the reaction Hydrolysis of proteins in presence of ATP.. Functionally, ATP-dependent serine protease that mediates the selective degradation of misfolded, unassembled or oxidatively damaged polypeptides as well as certain short-lived regulatory proteins in the mitochondrial matrix. May also have a chaperone function in the assembly of inner membrane protein complexes. Participates in the regulation of mitochondrial gene expression and in the maintenance of the integrity of the mitochondrial genome. Binds to mitochondrial DNA in a site-specific manner. The chain is Lon protease homolog, mitochondrial from Cryptococcus neoformans var. neoformans serotype D (strain JEC21 / ATCC MYA-565) (Filobasidiella neoformans).